The following is a 1692-amino-acid chain: MSSAVGPRGPRPPTVPPPMQELPDLSHLTEEERNIIMAVMDRQKEEEEKEEAMLKCVVRDMAKPAACKTPRNAENQPHQPSPRLHQQFESYKEQVRKIGEEARRYQGEHKDDAPTCGICHKTKFADGCGHLCSYCRTKFCARCGGRVSLRSNNEDKVVMWVCNLCRKQQEILTKSGAWFFGSGPQQTSQDGTLSDTATGAGSEVPREKKARLQERSRSQTPLSTAAASSQDAAPPSAPPDRSKGAEPSQQALGPEQKQASSRSRSEPPRERKKTPGLSEQNGKGALKSERKRVPKTSAQPVEGAVEERERKERRESRRLEKGRSQDYPDTPEKRDEGKAADEEKQRKEEDYQTRYRSDPNLARYPVKPPPEEQQMRMHARVSRARHERRHSDVALPRTEAGAALPEGKAGKRAPAAARASPPDSPRAYSAERTAETRAPGAKQLTNHSPPAPRHGPVPAEAPELKAQEPLRKQSRLDPSSAVLMRKAKREKVETMLRNDSLSSDQSESVRPSPPKPHRSKRGGKKRQMSVSSSEEEGVSTPEYTSCEDVELESESVSEKGDLDYYWLDPATWHSRETSPISSHPVTWQPSKEGDRLIGRVILNKRTTMPKDSGALLGLKVVGGKMTDLGRLGAFITKVKKGSLADVVGHLRAGDEVLEWNGKPLPGATNEEVYNIILESKSEPQVEIIVSRPIGDIPRIPESSHPPLESSSSSFESQKMERPSISVISPTSPGALKDAPQVLPGQLSVKLWYDKVGHQLIVNVLQATDLPARVDGRPRNPYVKMYFLPDRSDKSKRRTKTVKKILEPKWNQTFVYSHVHRRDFRERMLEITVWDQPRVQEEESEFLGEILIELETALLDDEPHWYKLQTHDESSLPLPQPSPFMPRRHIHGESSSKKLQRSQRISDSDISDYEVDDGIGVVPPVGYRSSARESKSTTLTVPEQQRTTHHRSRSVSPHRGNDQGKPRSRLPNVPLQRSLDEIHPTRRSRSPTRHHDASRSPVDHRTRDVDSQYLSEQDSELLMLPRAKRGRSAECLHTTRHLVRHYKTLPPKMPLLQSSSHWNIYSSILPAHTKTKSVTRQDISLHHECFNSTVLRFTDEILVSELQPFLDRARSASTNCLRPDTSLHSPERERGRWSPSLDRRRPPSPRIQIQHASPENDRHSRKSERSSIQKQTRKGTASDAERVLPTCLSRRGHAAPRATDQPVIRGKHPARSRSSEHSSIRTLCSMHHLVPGGSAPPSPLLTRMHRQRSPTQSPPADTSFSSRRGRQLPQVPVRSGSIEQASLVVEERTRQMKMKVHRFKQTTGSGSSQELDREQYSKYNIHKDQYRSCDNVSAKSSDSDVSDVSAISRTSSASRLSSTSFMSEQSERPRGRISSFTPKMQGRRMGTSGRSIMKSTSVSGEMYTLEHNDGSQSDTAVGTVGAGGKKRRSSLSAKVVAIVSRRSRSTSQLSQTESGHKKLKSTIQRSTETGMAAEMRKMVRQPSRESTDGSINSYSSEGNLIFPGVRLGADSQFSDFLDGLGPAQLVGRQTLATPAMGDIQIGMEDKKGQLEVEVIRARSLTQKPGSKSTPAPYVKVYLLENGACIAKKKTRIARKTLDPLYQQSLVFDESPQGKVLQVIVWGDYGRMDHKCFMGVAQILLEELDLSSMVIGWYKLFPPSSLVDPTLTPLTRRASQSSLESSTGPPCIRS.

Residues 1-26 form a disordered region; it reads MSSAVGPRGPRPPTVPPPMQELPDLS. Over residues 9–20 the composition is skewed to pro residues; the sequence is GPRPPTVPPPMQ. The region spanning 22–182 is the RabBD domain; sequence LPDLSHLTEE…TKSGAWFFGS (161 aa). The FYVE-type zinc finger occupies 110 to 170; the sequence is KDDAPTCGIC…VCNLCRKQQE (61 aa). Zn(2+) contacts are provided by C116, C119, C132, C135, C140, C143, C162, and C165. A compositionally biased stretch (polar residues) spans 183–199; it reads GPQQTSQDGTLSDTATG. Residues 183-555 are disordered; it reads GPQQTSQDGT…CEDVELESES (373 aa). Basic and acidic residues predominate over residues 204–217; that stretch reads VPREKKARLQERSR. Over residues 223–234 the composition is skewed to low complexity; sequence STAAASSQDAAP. Over residues 305-357 the composition is skewed to basic and acidic residues; sequence VEERERKERRESRRLEKGRSQDYPDTPEKRDEGKAADEEKQRKEEDYQTRYRS. Over residues 377-388 the composition is skewed to basic residues; that stretch reads MHARVSRARHER. Residues 412 to 430 are compositionally biased toward low complexity; that stretch reads RAPAAARASPPDSPRAYSA. Positions 462-475 are enriched in basic and acidic residues; it reads PELKAQEPLRKQSR. Positions 497–509 are enriched in polar residues; that stretch reads RNDSLSSDQSESV. S500 is modified (phosphoserine). Positions 515–527 are enriched in basic residues; that stretch reads KPHRSKRGGKKRQ. Over residues 545–555 the composition is skewed to acidic residues; that stretch reads SCEDVELESES. A Phosphoserine modification is found at S578. Residues 605 to 691 form the PDZ domain; the sequence is RTTMPKDSGA…EPQVEIIVSR (87 aa). A disordered region spans residues 698 to 732; that stretch reads RIPESSHPPLESSSSSFESQKMERPSISVISPTSP. The segment covering 700-716 has biased composition (low complexity); the sequence is PESSHPPLESSSSSFES. Residues S728 and S731 each carry the phosphoserine modification. A C2 1 domain is found at 742-865; the sequence is LPGQLSVKLW…ALLDDEPHWY (124 aa). The segment at 870–1013 is disordered; it reads HDESSLPLPQ…RTRDVDSQYL (144 aa). S881 carries the phosphoserine modification. The segment covering 935–944 has biased composition (polar residues); sequence STTLTVPEQQ. S977 is subject to Phosphoserine. Basic and acidic residues predominate over residues 992 to 1009; it reads RHHDASRSPVDHRTRDVD. The residue at position 1031 (S1031) is a Phosphoserine. Disordered regions lie at residues 1118–1222 and 1235–1278; these read NCLR…EHSS and GGSA…PVRS. Composition is skewed to basic and acidic residues over residues 1128–1144 and 1157–1170; these read SPER…DRRR and PEND…ERSS. S1252 is subject to Phosphoserine. The span at 1252-1265 shows a compositional bias: polar residues; it reads SPTQSPPADTSFSS. T1254 carries the post-translational modification Phosphothreonine. 7 positions are modified to phosphoserine: S1256, S1308, S1310, S1311, S1339, S1340, and S1342. Disordered stretches follow at residues 1332 to 1394, 1408 to 1428, and 1445 to 1495; these read CDNV…SGRS, LEHN…AGGK, and RSRS…GSIN. Low complexity predominate over residues 1345–1366; the sequence is SDVSAISRTSSASRLSSTSFMS. A Phosphoserine modification is found at S1416. Residues 1477–1490 are compositionally biased toward basic and acidic residues; sequence EMRKMVRQPSREST. In terms of domain architecture, C2 2 spans 1538 to 1656; it reads AMGDIQIGME…DLSSMVIGWY (119 aa). A phosphoserine mark is found at S1677, S1680, S1683, and S1692.

As to quaternary structure, binds RAB3A, RAB3B and RAB3D that have been activated by GTP-binding. Interacts with RAB3C, RAB10, RAB26 and RAB37. Binds UNC13A. Interacts with TSPOAP1 and RIMBP2. Interacts with PPFIA3 and PPFIA4. Interacts with ERC1. Binds SNAP25, SYT1 and CACNA1B. Interaction with SYT1 is enhanced by calcium ions. Interaction with SNAP25 is weaker in the presence of calcium ions. Post-translationally, phosphorylated by BRSK1. In terms of tissue distribution, expressed in melanocytes. Detected in brain and retina.

The protein resides in the cell membrane. Its subcellular location is the synapse. It localises to the presynaptic cell membrane. Its function is as follows. Rab effector involved in exocytosis. May act as scaffold protein that regulates neurotransmitter release at the active zone. Essential for maintaining normal probability of neurotransmitter release and for regulating release during short-term synaptic plasticity. Plays a role in dendrite formation by melanocytes. This chain is Regulating synaptic membrane exocytosis protein 1 (RIMS1), found in Homo sapiens (Human).